The following is a 798-amino-acid chain: MEEPTTSELKLSDNVMNEISDMCITEYCKPNMSLMAQINELFPTEQSLTQLDSIIASVEGEIGELDNELAYLVETNANVSERGEEALKHAQDAMIELEKSIGSIRERTKSSDEIVREMTRDIKQLDIAKRNLTASITTLHHLHILLTGVESLGAWVDKKDYSSIARQLPAILNVLQLFDAYKESDQIANLSGQLDKLKASLTIQLAKDLKNAFQTGQLSDRITDMCRVAAALEGNVKENFVKWFIEQQLSEYVIIYADNEEGAWLDKVDDRYKWFVRKLTDFERAGLSNIFPADWHMGRRLTSEFCTVTRDILYRIMTRRRQDLDWKLLGHAIQHTKMFEALLTKRFPEKDGISFEKAIWSVFDTFLDVFINAQEKTLNEFLDTCASKIRSGEEKPSRESSTHAVPFPSSADMFLLLKKVITESSKLSSEPDALIRDVIGVVRVCLRGYATSCLVAFLPSLGSQQSGAANLFSLIREEIAYPRLTPDQQFLVCCILATADWCAETSIQLQEKLSQRIPGVDISQETEAFYSITNQSLQVLVQDVESTCDAALQSISKVNWTAVDCVGDESPFIGSMRAHLRQAVPLIRDMLSDRRKYFAHFCLKLATQLAHKFVGSLFRCRTISTHGAEQLLLDTHSLKTFLLSVPSIDSIINSKPPTAYVTSVNAALTKAEMILKVVMCSLETVDEFVEQYIKLLPASDAAEMQKVLEMKGVKRQEHSAVLNAYRLKIGASGSDPIQQSNSLTSRIGGALPTVGSAASVSEAFNAVVSMAADGLSDQAVTSSIDKLKRFERLVKRQL.

Belongs to the VPS53 family. As to quaternary structure, component of the Golgi-associated retrograde protein (GARP) complex, also called VFT (VPS fifty-three) complex, composed of vps-51, vps-52, vps-53 and vps-54. Within the complex interacts with vps-51, vps-52 and vps-54. As to expression, ubiquitously expressed, with particularly strong expression in neuronal cells. Specifically expressed in head and tail neurons and in the pharynx and ventral cord motor neurons.

It localises to the golgi apparatus. It is found in the trans-Golgi network membrane. The protein resides in the endosome membrane. The protein localises to the perikaryon. Its subcellular location is the cytoplasm. It localises to the perinuclear region. Its function is as follows. Acts as a component of the GARP complex that is involved in retrograde transport from early and late endosomes to the trans-Golgi network (TGN). The GARP complex facilitates tethering as well as SNARE complex assembly at the Golgi. Plays a role in the trafficking of cargo to dense-core vesicles, probably through association with the EARP-interacting protein eipr-1. Important for neuronal function. This is Vacuolar protein sorting-associated protein 53 homolog from Caenorhabditis elegans.